Consider the following 134-residue polypeptide: MAKSPANNAAQRVRKKVRKNISDGIAHVHASFNNTIITITDRQGNALSWASSGGQGFKGSRKSTPFAAQVASEVAGRAAIEQGIKNLDVEIKGPGPGRESSVRALGALGIRITSIADVTPVPHNGCRPQKRRRI.

This sequence belongs to the universal ribosomal protein uS11 family. Part of the 30S ribosomal subunit. Interacts with proteins S7 and S18. Binds to IF-3.

In terms of biological role, located on the platform of the 30S subunit, it bridges several disparate RNA helices of the 16S rRNA. Forms part of the Shine-Dalgarno cleft in the 70S ribosome. The polypeptide is Small ribosomal subunit protein uS11 (Delftia acidovorans (strain DSM 14801 / SPH-1)).